We begin with the raw amino-acid sequence, 491 residues long: Probable cytosol aminopeptidase (491 aa).

Residues Lys260 and Asp265 each contribute to the Mn(2+) site. Residue Lys272 is part of the active site. Positions 284, 343, and 345 each coordinate Mn(2+). The active site involves Arg347.

This sequence belongs to the peptidase M17 family. Requires Mn(2+) as cofactor.

The protein localises to the cytoplasm. It carries out the reaction Release of an N-terminal amino acid, Xaa-|-Yaa-, in which Xaa is preferably Leu, but may be other amino acids including Pro although not Arg or Lys, and Yaa may be Pro. Amino acid amides and methyl esters are also readily hydrolyzed, but rates on arylamides are exceedingly low.. The catalysed reaction is Release of an N-terminal amino acid, preferentially leucine, but not glutamic or aspartic acids.. In terms of biological role, presumably involved in the processing and regular turnover of intracellular proteins. Catalyzes the removal of unsubstituted N-terminal amino acids from various peptides. The sequence is that of Probable cytosol aminopeptidase from Trichormus variabilis (strain ATCC 29413 / PCC 7937) (Anabaena variabilis).